The chain runs to 257 residues: MAMTLPYLIQAKQQGRPLVALTAWDYAIAQLLDGAGVDIILVGDSLAMVALGHRTTLPITLDEMIHHAKAVCRGVKQSLVVCDLPFLSYQESISQAIRSAGRVLKETGAQGVKLEGGHAVAVETVQQLTSIGIPVMGHVGLTPQSVHRLGYRQQGQTEIDAERIISEAIALENAGVFALVLEHIPINLAATITSKLSIPTIGIGAGPHCDGQVLVTADLLGLSKKQPPFAKSYLNLRGLITEAVNEFSREVREGEFP.

Residues D44 and D83 each coordinate Mg(2+). 3-methyl-2-oxobutanoate contacts are provided by residues 44 to 45 (DS), D83, and K113. E115 is a binding site for Mg(2+). Catalysis depends on E182, which acts as the Proton acceptor.

The protein belongs to the PanB family. In terms of assembly, homodecamer; pentamer of dimers. The cofactor is Mg(2+).

The protein localises to the cytoplasm. The catalysed reaction is 3-methyl-2-oxobutanoate + (6R)-5,10-methylene-5,6,7,8-tetrahydrofolate + H2O = 2-dehydropantoate + (6S)-5,6,7,8-tetrahydrofolate. It participates in cofactor biosynthesis; (R)-pantothenate biosynthesis; (R)-pantoate from 3-methyl-2-oxobutanoate: step 1/2. In terms of biological role, catalyzes the reversible reaction in which hydroxymethyl group from 5,10-methylenetetrahydrofolate is transferred onto alpha-ketoisovalerate to form ketopantoate. This is 3-methyl-2-oxobutanoate hydroxymethyltransferase from Rippkaea orientalis (strain PCC 8801 / RF-1) (Cyanothece sp. (strain PCC 8801)).